Consider the following 282-residue polypeptide: Probable protein phosphatase 2C 10 (282 aa).

The 248-residue stretch at 34-281 (KFGYSLVKGK…DDISCIVVRL (248 aa)) folds into the PPM-type phosphatase domain. The Mn(2+) site is built by aspartate 71, glycine 72, aspartate 233, and aspartate 272.

The protein belongs to the PP2C family. The cofactor is Mg(2+). Mn(2+) is required as a cofactor.

It carries out the reaction O-phospho-L-seryl-[protein] + H2O = L-seryl-[protein] + phosphate. The enzyme catalyses O-phospho-L-threonyl-[protein] + H2O = L-threonyl-[protein] + phosphate. The chain is Probable protein phosphatase 2C 10 from Arabidopsis thaliana (Mouse-ear cress).